A 173-amino-acid polypeptide reads, in one-letter code: Small ribosomal subunit protein mS25 (173 aa).

Belongs to the mitochondrion-specific ribosomal protein mS25 family. Component of the mitochondrial ribosome small subunit (28S) which comprises a 12S rRNA and about 30 distinct proteins.

Its subcellular location is the mitochondrion. The sequence is that of Small ribosomal subunit protein mS25 (MRPS25) from Bos taurus (Bovine).